The following is a 440-amino-acid chain: Chromosome partition protein MukF (440 aa).

The interval 208 to 236 (LSETSGTLRELQDTLEAAGDKLQANLLRI) is leucine-zipper.

Belongs to the MukF family. In terms of assembly, interacts, and probably forms a ternary complex, with MukE and MukB via its C-terminal region. The complex formation is stimulated by calcium or magnesium. It is required for an interaction between MukE and MukB.

The protein resides in the cytoplasm. It localises to the nucleoid. In terms of biological role, involved in chromosome condensation, segregation and cell cycle progression. May participate in facilitating chromosome segregation by condensation DNA from both sides of a centrally located replisome during cell division. Not required for mini-F plasmid partitioning. Probably acts via its interaction with MukB and MukE. Overexpression results in anucleate cells. It has a calcium binding activity. The sequence is that of Chromosome partition protein MukF from Edwardsiella ictaluri (strain 93-146).